The chain runs to 346 residues: Histone PARylation factor 1 (346 aa).

N-acetylmethionine is present on methionine 1. A compositionally biased stretch (basic residues) spans 1–10 (MVGGGAKRRL). Residues 1–29 (MVGGGAKRRLRGEGPQCEKPVDMKKSKSC) are disordered. Lysine 19 bears the N6-acetyllysine mark. Over residues 19–29 (KPVDMKKSKSC) the composition is skewed to basic and acidic residues. Serine 97 carries the post-translational modification ADP-ribosylserine. Lysine 186 and lysine 233 each carry N6-acetyllysine. Aspartate 235 is modified (polyADP-ribosyl aspartic acid). Tyrosine 238 carries the post-translational modification ADP-ribosyltyrosine. Position 240 is a polyADP-ribosyl glutamic acid (glutamate 240). Residues 242 to 346 (PETDASLRRI…SQDDVDQLAA (105 aa)) are interaction with PARP1. The Proton donor role is filled by glutamate 284.

The protein belongs to the HPF1 family. Interacts with PARP1 (via the PARP catalytic domain). Interacts with PARP2 (via the PARP catalytic domain). Interacts with core nucleosomes in a PARP1- and PARP2-dependent manner.

The protein localises to the chromosome. The protein resides in the nucleus. Its function is as follows. Cofactor for serine ADP-ribosylation that confers serine specificity on PARP1 and PARP2 and plays a key role in DNA damage response. Initiates the repair of double-strand DNA breaks: recruited to DNA damage sites by PARP1 and PARP2 and switches the amino acid specificity of PARP1 and PARP2 from aspartate or glutamate to serine residues, licensing serine ADP-ribosylation of target proteins. Serine ADP-ribosylation of target proteins, such as histones, promotes decompaction of chromatin and the recruitment of repair factors leading to the reparation of DNA strand breaks. Serine ADP-ribosylation of proteins constitutes the primary form of ADP-ribosylation of proteins in response to DNA damage. HPF1 acts by completing the active site of PARP1 and PARP2: forms a composite active site composed of residues from HPF1 and PARP1 or PARP2. While HPF1 promotes the initiation of serine ADP-ribosylation, it restricts the polymerase activity of PARP1 and PARP2 in order to limit the length of poly-ADP-ribose chains. HPF1 also promotes tyrosine ADP-ribosylation, probably by conferring tyrosine specificity on PARP1. In Bos taurus (Bovine), this protein is Histone PARylation factor 1.